A 456-amino-acid polypeptide reads, in one-letter code: Hydroxymethylglutaryl-CoA synthase ERG13 (456 aa).

(3S)-3-hydroxy-3-methylglutaryl-CoA is bound at residue Ala35. Glu86 (proton donor/acceptor) is an active-site residue. Residues Cys118, Asn156, Thr160, Ser210, His259, Lys268, Asn336, and Ser370 each contribute to the (3S)-3-hydroxy-3-methylglutaryl-CoA site. Cys118 acts as the Acyl-thioester intermediate in catalysis. Residue His259 is the Proton donor/acceptor of the active site.

The protein belongs to the thiolase-like superfamily. HMG-CoA synthase family.

It carries out the reaction acetoacetyl-CoA + acetyl-CoA + H2O = (3S)-3-hydroxy-3-methylglutaryl-CoA + CoA + H(+). It functions in the pathway metabolic intermediate biosynthesis; (R)-mevalonate biosynthesis; (R)-mevalonate from acetyl-CoA: step 2/3. Hydroxymethylglutaryl-CoA synthase; part of the first module of ergosterol biosynthesis pathway that includes the early steps of the pathway, conserved across all eukaryotes, and which results in the formation of mevalonate from acetyl-coenzyme A (acetyl-CoA). ERG13 condenses acetyl-CoA with acetoacetyl-CoA to form hydroxymethylglutaryl-CoA (HMG-CoA). The first module starts with the action of the cytosolic acetyl-CoA acetyltransferase ERG10B that catalyzes the formation of acetoacetyl-CoA. The hydroxymethylglutaryl-CoA synthases ERG13 then condenses acetyl-CoA with acetoacetyl-CoA to form HMG-CoA. The rate-limiting step of the early module is the reduction to mevalonate by the 3-hydroxy-3-methylglutaryl-coenzyme A (HMG-CoA) reductases HMG1. The polypeptide is Hydroxymethylglutaryl-CoA synthase ERG13 (Gibberella zeae (strain ATCC MYA-4620 / CBS 123657 / FGSC 9075 / NRRL 31084 / PH-1) (Wheat head blight fungus)).